The sequence spans 440 residues: Transposon Ty1-PR3 Gag polyprotein (440 aa).

Polar residues-rich tracts occupy residues 1–23 (MESQQLSNYSPISHGSACASVTS), 48–60 (TKANSQQTTTPAS), and 127–152 (QSQFPQYPSSVGTPLSTPSPESGNTF). 3 disordered regions span residues 1 to 93 (MESQ…MMTQ), 126 to 173 (PQSQ…RPPP), and 352 to 440 (GSRN…PGTY). Low complexity predominate over residues 153-165 (TDSSSADSDMTST). Positions 299-401 (NNGIHINNKV…NSKSKTARAH (103 aa)) are RNA-binding. Residues 402 to 418 (NVSTSNNSPSTDNDSIS) are compositionally biased toward low complexity. S416 is subject to Phosphoserine. Over residues 419–428 (KSTTEPIQLN) the composition is skewed to polar residues. Residues 429–440 (NKHDLHLRPGTY) show a composition bias toward basic and acidic residues.

As to quaternary structure, homotrimer.

Its subcellular location is the cytoplasm. In terms of biological role, capsid protein (CA) is the structural component of the virus-like particle (VLP), forming the shell that encapsulates the retrotransposons dimeric RNA genome. The particles are assembled from trimer-clustered units and there are holes in the capsid shells that allow for the diffusion of macromolecules. CA also has nucleocapsid-like chaperone activity, promoting primer tRNA(i)-Met annealing to the multipartite primer-binding site (PBS), dimerization of Ty1 RNA and initiation of reverse transcription. The chain is Transposon Ty1-PR3 Gag polyprotein (TY1A-PR3) from Saccharomyces cerevisiae (strain ATCC 204508 / S288c) (Baker's yeast).